The chain runs to 354 residues: UDP-3-O-acylglucosamine N-acyltransferase (354 aa).

H245 acts as the Proton acceptor in catalysis.

The protein belongs to the transferase hexapeptide repeat family. LpxD subfamily. In terms of assembly, homotrimer.

It carries out the reaction a UDP-3-O-[(3R)-3-hydroxyacyl]-alpha-D-glucosamine + a (3R)-hydroxyacyl-[ACP] = a UDP-2-N,3-O-bis[(3R)-3-hydroxyacyl]-alpha-D-glucosamine + holo-[ACP] + H(+). Its pathway is bacterial outer membrane biogenesis; LPS lipid A biosynthesis. Functionally, catalyzes the N-acylation of UDP-3-O-acylglucosamine using 3-hydroxyacyl-ACP as the acyl donor. Is involved in the biosynthesis of lipid A, a phosphorylated glycolipid that anchors the lipopolysaccharide to the outer membrane of the cell. The polypeptide is UDP-3-O-acylglucosamine N-acyltransferase (Anaeromyxobacter sp. (strain K)).